Consider the following 135-residue polypeptide: MVKFLKQNKAVILLQGRYAGKKAVIIKSFDDGTSDRRYGHCLVAGLKKYPSKVIRKDSAKKTAKKSRVKCFIKLVNYQHLMPTRYTLDVDLKEVATLDALKSKDKKVTALKEAKAKLEERFKTGKNRWFFTKLRF.

The protein belongs to the eukaryotic ribosomal protein eL27 family.

The polypeptide is Large ribosomal subunit protein eL27y (RPL27B) (Arabidopsis thaliana (Mouse-ear cress)).